Reading from the N-terminus, the 321-residue chain is Torsin-2A (321 aa).

An N-terminal signal peptide occupies residues 1 to 26; sequence MAAATRSCRPWGSLLGLIWLVSAAAA. 93-100 contributes to the ATP binding site; the sequence is GWTGTGKS. Asparagine 149 carries an N-linked (GlcNAc...) asparagine glycan.

This sequence belongs to the ClpA/ClpB family. Torsin subfamily. Homohexamer. Interacts with TOR1AIP1.

It is found in the endoplasmic reticulum lumen. This is Torsin-2A (TOR2A) from Bos taurus (Bovine).